The primary structure comprises 400 residues: Transposase for insertion sequence element ISRM3 (400 aa).

Belongs to the transposase mutator family.

Required for the transposition of the insertion element. In Rhizobium meliloti (strain 1021) (Ensifer meliloti), this protein is Transposase for insertion sequence element ISRM3.